The primary structure comprises 125 residues: Large ribosomal subunit protein bL12 (125 aa).

This sequence belongs to the bacterial ribosomal protein bL12 family. As to quaternary structure, homodimer. Part of the ribosomal stalk of the 50S ribosomal subunit. Forms a multimeric L10(L12)X complex, where L10 forms an elongated spine to which 2 to 4 L12 dimers bind in a sequential fashion. Binds GTP-bound translation factors.

Functionally, forms part of the ribosomal stalk which helps the ribosome interact with GTP-bound translation factors. Is thus essential for accurate translation. The chain is Large ribosomal subunit protein bL12 from Ruthia magnifica subsp. Calyptogena magnifica.